The sequence spans 710 residues: Polyribonucleotide nucleotidyltransferase (710 aa).

D486 and D492 together coordinate Mg(2+). The 60-residue stretch at 553 to 612 (PRIHTIKISVDKIKDVIGKGGSVIRALTEETGTTIEIEDDGTVKIAATDGDKAKFAIRRI) folds into the KH domain. The region spanning 622–690 (GRIYNGKVTR…RQGRVRLSIK (69 aa)) is the S1 motif domain. The segment at 690-710 (KEAGEQAQPEAEAVPAAPEAE) is disordered. The segment covering 694 to 710 (EQAQPEAEAVPAAPEAE) has biased composition (low complexity).

The protein belongs to the polyribonucleotide nucleotidyltransferase family. As to quaternary structure, component of the RNA degradosome, which is a multiprotein complex involved in RNA processing and mRNA degradation. It depends on Mg(2+) as a cofactor.

Its subcellular location is the cytoplasm. It catalyses the reaction RNA(n+1) + phosphate = RNA(n) + a ribonucleoside 5'-diphosphate. In terms of biological role, involved in mRNA degradation. Catalyzes the phosphorolysis of single-stranded polyribonucleotides processively in the 3'- to 5'-direction. The polypeptide is Polyribonucleotide nucleotidyltransferase (Erwinia tasmaniensis (strain DSM 17950 / CFBP 7177 / CIP 109463 / NCPPB 4357 / Et1/99)).